Here is a 43-residue protein sequence, read N- to C-terminus: Protein PsbN (43 aa).

The chain crosses the membrane as a helical span at residues 5 to 27 (TLVAISISGLLVSFTGYALYTAF).

This sequence belongs to the PsbN family.

Its subcellular location is the plastid. It is found in the chloroplast thylakoid membrane. Functionally, may play a role in photosystem I and II biogenesis. In Houttuynia cordata (Chameleon plant), this protein is Protein PsbN.